Reading from the N-terminus, the 327-residue chain is Phenylalanine--tRNA ligase alpha subunit (327 aa).

Glutamate 252 contributes to the Mg(2+) binding site.

This sequence belongs to the class-II aminoacyl-tRNA synthetase family. Phe-tRNA synthetase alpha subunit type 1 subfamily. In terms of assembly, tetramer of two alpha and two beta subunits. Requires Mg(2+) as cofactor.

The protein resides in the cytoplasm. It carries out the reaction tRNA(Phe) + L-phenylalanine + ATP = L-phenylalanyl-tRNA(Phe) + AMP + diphosphate + H(+). The chain is Phenylalanine--tRNA ligase alpha subunit from Shigella boydii serotype 18 (strain CDC 3083-94 / BS512).